Here is a 216-residue protein sequence, read N- to C-terminus: MSCSIFKDLPEDHPRRLIPALCRQFYHLGWVTGTGGGMSIKLNNEIYIAPSGVQKERMQPEDLFVQDIDGKDLQMPPEIRELKKSQCTPLFMLAYRHRNAGAVIHTHSQHAVMATLLWPGKTFRCTHLEMIKGVYDDADKRYLQYDEQLVVPIIENTPHERDLADSMYAGHDGASRLQCRSGQTPRSECSDYLFSIAVEMKMAGLDPETFVDASKA.

Cysteine 87 provides a ligand contact to substrate. Histidine 105 and histidine 107 together coordinate Zn(2+). Catalysis depends on glutamate 129, which acts as the Proton donor/acceptor.

Belongs to the aldolase class II family. MtnB subfamily. It depends on Zn(2+) as a cofactor.

It localises to the cytoplasm. It catalyses the reaction 5-(methylsulfanyl)-D-ribulose 1-phosphate = 5-methylsulfanyl-2,3-dioxopentyl phosphate + H2O. The protein operates within amino-acid biosynthesis; L-methionine biosynthesis via salvage pathway; L-methionine from S-methyl-5-thio-alpha-D-ribose 1-phosphate: step 2/6. Functionally, catalyzes the dehydration of methylthioribulose-1-phosphate (MTRu-1-P) into 2,3-diketo-5-methylthiopentyl-1-phosphate (DK-MTP-1-P). This chain is Probable methylthioribulose-1-phosphate dehydratase, found in Drosophila persimilis (Fruit fly).